The sequence spans 1574 residues: DNA-directed RNA polymerase subunit beta' (1574 aa).

Residues cysteine 64, cysteine 66, cysteine 79, and cysteine 82 each coordinate Zn(2+). Positions 590, 592, and 594 each coordinate Mg(2+). Cysteine 928, cysteine 1002, cysteine 1009, and cysteine 1012 together coordinate Zn(2+).

It belongs to the RNA polymerase beta' chain family. In terms of assembly, the RNAP catalytic core consists of 2 alpha, 1 beta, 1 beta' and 1 omega subunit. When a sigma factor is associated with the core the holoenzyme is formed, which can initiate transcription. Mg(2+) is required as a cofactor. The cofactor is Zn(2+).

It catalyses the reaction RNA(n) + a ribonucleoside 5'-triphosphate = RNA(n+1) + diphosphate. DNA-dependent RNA polymerase catalyzes the transcription of DNA into RNA using the four ribonucleoside triphosphates as substrates. This Aquifex aeolicus (strain VF5) protein is DNA-directed RNA polymerase subunit beta'.